A 144-amino-acid chain; its full sequence is Transcriptional regulator MraZ (144 aa).

SpoVT-AbrB domains are found at residues 5-50 and 81-124; these read TFNH…ALPQ and AHEV…DRAA.

Belongs to the MraZ family. In terms of assembly, forms oligomers.

It is found in the cytoplasm. The protein localises to the nucleoid. This chain is Transcriptional regulator MraZ, found in Anaeromyxobacter dehalogenans (strain 2CP-C).